A 256-amino-acid polypeptide reads, in one-letter code: Small ribosomal subunit protein eS1 (256 aa).

The span at 1 to 18 (MAVGKNKRLSKGKKGVKK) shows a compositional bias: basic residues. The segment at 1 to 21 (MAVGKNKRLSKGKKGVKKRTV) is disordered. Alanine 2 is subject to N-acetylalanine; partial.

This sequence belongs to the eukaryotic ribosomal protein eS1 family. As to quaternary structure, component of the small ribosomal subunit. Mature ribosomes consist of a small (40S) and a large (60S) subunit. The 40S subunit contains about 33 different proteins and 1 molecule of RNA (18S). The 60S subunit contains about 49 different proteins and 3 molecules of RNA (25S, 5.8S and 5S).

Its subcellular location is the cytoplasm. This Aspergillus niger (strain ATCC MYA-4892 / CBS 513.88 / FGSC A1513) protein is Small ribosomal subunit protein eS1 (rps1).